Consider the following 330-residue polypeptide: Glycerol-3-phosphate dehydrogenase [NAD(P)+] (330 aa).

The NADPH site is built by S10, W11, R31, and K105. 3 residues coordinate sn-glycerol 3-phosphate: K105, G135, and S137. A139 contacts NADPH. Sn-glycerol 3-phosphate contacts are provided by K190, D243, S253, R254, and N255. The active-site Proton acceptor is K190. Residue R254 coordinates NADPH. Residues V278 and E280 each contribute to the NADPH site.

It belongs to the NAD-dependent glycerol-3-phosphate dehydrogenase family.

The protein resides in the cytoplasm. It catalyses the reaction sn-glycerol 3-phosphate + NAD(+) = dihydroxyacetone phosphate + NADH + H(+). It carries out the reaction sn-glycerol 3-phosphate + NADP(+) = dihydroxyacetone phosphate + NADPH + H(+). It participates in membrane lipid metabolism; glycerophospholipid metabolism. In terms of biological role, catalyzes the reduction of the glycolytic intermediate dihydroxyacetone phosphate (DHAP) to sn-glycerol 3-phosphate (G3P), the key precursor for phospholipid synthesis. This is Glycerol-3-phosphate dehydrogenase [NAD(P)+] from Oleidesulfovibrio alaskensis (strain ATCC BAA-1058 / DSM 17464 / G20) (Desulfovibrio alaskensis).